The chain runs to 26 residues: Photosystem II stability/assembly factor HCF136, chloroplastic (26 aa).

The protein belongs to the Ycf48 family.

Its subcellular location is the plastid. It is found in the chloroplast thylakoid lumen. Its function is as follows. Essential for photosystem II (PSII) biogenesis; required for assembly of an early intermediate in PSII assembly that includes D2 (psbD) and cytochrome b559. In Populus euphratica (Euphrates poplar), this protein is Photosystem II stability/assembly factor HCF136, chloroplastic.